Here is a 417-residue protein sequence, read N- to C-terminus: NADH-quinone oxidoreductase subunit D (417 aa).

It belongs to the complex I 49 kDa subunit family. In terms of assembly, NDH-1 is composed of 14 different subunits. Subunits NuoB, C, D, E, F, and G constitute the peripheral sector of the complex.

It localises to the cell inner membrane. It catalyses the reaction a quinone + NADH + 5 H(+)(in) = a quinol + NAD(+) + 4 H(+)(out). In terms of biological role, NDH-1 shuttles electrons from NADH, via FMN and iron-sulfur (Fe-S) centers, to quinones in the respiratory chain. The immediate electron acceptor for the enzyme in this species is believed to be ubiquinone. Couples the redox reaction to proton translocation (for every two electrons transferred, four hydrogen ions are translocated across the cytoplasmic membrane), and thus conserves the redox energy in a proton gradient. The sequence is that of NADH-quinone oxidoreductase subunit D from Alkalilimnicola ehrlichii (strain ATCC BAA-1101 / DSM 17681 / MLHE-1).